The primary structure comprises 338 residues: Activator of 90 kDa heat shock protein ATPase homolog 1 (338 aa).

Residue Lys-3 is modified to N6-acetyllysine. Residue Lys-182 forms a Glycyl lysine isopeptide (Lys-Gly) (interchain with G-Cter in SUMO1) linkage. Phosphoserine is present on Ser-193. A Glycyl lysine isopeptide (Lys-Gly) (interchain with G-Cter in SUMO2) cross-link involves residue Lys-203. N6-acetyllysine is present on Lys-212. Tyr-223 carries the phosphotyrosine; by ABL modification. Residue Ser-258 is modified to Phosphoserine.

This sequence belongs to the AHA1 family. As to quaternary structure, interacts with HSPCA/HSP90. Interacts (phosphorylated on Tyr-223) with HSP90AA1; the interaction activates HSP90AA1 ATPase activity. Interacts with HSP90AB1. Interacts with GCH1. Interacts with SRPK1. Interacts with FLCN. In terms of assembly, (Microbial infection) Interacts with vesicular stomatitis virus glycoprotein (VSV G) (via cytoplasmic tail). Post-translationally, phosphorylation at Tyr-223 enhances binding to chaperone HSP90AA1. Expressed in numerous tissues, including brain, heart, skeletal muscle and kidney and, at lower levels, liver and placenta.

The protein resides in the cytoplasm. It is found in the cytosol. The protein localises to the endoplasmic reticulum. Acts as a co-chaperone of HSP90AA1. Activates the ATPase activity of HSP90AA1 leading to increase in its chaperone activity. Competes with the inhibitory co-chaperone FNIP1 for binding to HSP90AA1, thereby providing a reciprocal regulatory mechanism for chaperoning of client proteins. Competes with the inhibitory co-chaperone TSC1 for binding to HSP90AA1, thereby providing a reciprocal regulatory mechanism for chaperoning of client proteins. The sequence is that of Activator of 90 kDa heat shock protein ATPase homolog 1 (AHSA1) from Homo sapiens (Human).